A 372-amino-acid chain; its full sequence is tRNA-specific 2-thiouridylase MnmA (372 aa).

Residues glycine 16–serine 23 and methionine 42 contribute to the ATP site. The interaction with target base in tRNA stretch occupies residues asparagine 102–aspartate 104. The Nucleophile role is filled by cysteine 107. The cysteines at positions 107 and 205 are disulfide-linked. Position 132 (glycine 132) interacts with ATP. Positions lysine 155–glutamine 157 are interaction with tRNA. Residue cysteine 205 is the Cysteine persulfide intermediate of the active site. Residues arginine 317 to tyrosine 318 are interaction with tRNA.

Belongs to the MnmA/TRMU family.

The protein localises to the cytoplasm. It carries out the reaction S-sulfanyl-L-cysteinyl-[protein] + uridine(34) in tRNA + AH2 + ATP = 2-thiouridine(34) in tRNA + L-cysteinyl-[protein] + A + AMP + diphosphate + H(+). Functionally, catalyzes the 2-thiolation of uridine at the wobble position (U34) of tRNA, leading to the formation of s(2)U34. The protein is tRNA-specific 2-thiouridylase MnmA of Shewanella baltica (strain OS185).